Consider the following 143-residue polypeptide: Nucleoside diphosphate kinase (143 aa).

ATP-binding residues include K11, F59, R87, T93, R104, and N114. The Pros-phosphohistidine intermediate role is filled by H117.

It belongs to the NDK family. As to quaternary structure, homotetramer. It depends on Mg(2+) as a cofactor.

The protein resides in the cytoplasm. The catalysed reaction is a 2'-deoxyribonucleoside 5'-diphosphate + ATP = a 2'-deoxyribonucleoside 5'-triphosphate + ADP. It carries out the reaction a ribonucleoside 5'-diphosphate + ATP = a ribonucleoside 5'-triphosphate + ADP. Its function is as follows. Major role in the synthesis of nucleoside triphosphates other than ATP. The ATP gamma phosphate is transferred to the NDP beta phosphate via a ping-pong mechanism, using a phosphorylated active-site intermediate. The protein is Nucleoside diphosphate kinase of Alcanivorax borkumensis (strain ATCC 700651 / DSM 11573 / NCIMB 13689 / SK2).